The sequence spans 66 residues: Large ribosomal subunit protein eL29 (66 aa).

Residues 1–14 show a composition bias toward polar residues; sequence MAKSKNSTNKNQIS. Positions 1 to 66 are disordered; the sequence is MAKSKNSTNK…KNLEKKVNKE (66 aa). Basic residues predominate over residues 15-31; sequence KSHRNGIKKPKDHRHIS. The segment covering 47-66 has biased composition (basic and acidic residues); the sequence is IKNDPSIKKSKNLEKKVNKE.

Belongs to the eukaryotic ribosomal protein eL29 family.

It is found in the cytoplasm. The protein is Large ribosomal subunit protein eL29 (RPL29) of Tetrahymena thermophila.